A 246-amino-acid polypeptide reads, in one-letter code: uncharacterized protein (246 aa).

This is an uncharacterized protein from Acanthamoeba polyphaga (Amoeba).